The chain runs to 166 residues: Small ribosomal subunit protein uS4 (166 aa).

Residues 103 to 165 (RRLQTVVYKK…PTSPYFKKAQ (63 aa)) enclose the S4 RNA-binding domain.

Belongs to the universal ribosomal protein uS4 family. Part of the 30S ribosomal subunit. Contacts protein S5. The interaction surface between S4 and S5 is involved in control of translational fidelity.

Its function is as follows. One of the primary rRNA binding proteins, it binds directly to 16S rRNA where it nucleates assembly of the body of the 30S subunit. In terms of biological role, with S5 and S12 plays an important role in translational accuracy. This is Small ribosomal subunit protein uS4 from Ignicoccus hospitalis (strain KIN4/I / DSM 18386 / JCM 14125).